The chain runs to 526 residues: Peptide chain release factor 3 (526 aa).

The tr-type G domain maps to 9–277 (DKRRTFAIIS…GIVEWAPIPQ (269 aa)). GTP contacts are provided by residues 18-25 (SHPDAGKT), 86-90 (DTPGH), and 140-143 (NKLD).

It belongs to the TRAFAC class translation factor GTPase superfamily. Classic translation factor GTPase family. PrfC subfamily.

The protein resides in the cytoplasm. In terms of biological role, increases the formation of ribosomal termination complexes and stimulates activities of RF-1 and RF-2. It binds guanine nucleotides and has strong preference for UGA stop codons. It may interact directly with the ribosome. The stimulation of RF-1 and RF-2 is significantly reduced by GTP and GDP, but not by GMP. This chain is Peptide chain release factor 3, found in Shewanella halifaxensis (strain HAW-EB4).